Consider the following 198-residue polypeptide: MKTQQIAQQLILGSSSIYRRDLLQRLQIPFDVSNPDIDETPLPGETPDATAVRLAAAKTRAVAATHPGALIIGADQVAVFEGIQLGKPLNHLNATRQLQLIRGKEVSFYTALCLFNSAQDTTRARLVPSRVKFRLLSDRQIENYLDKEQPYHCAASSKLEGLGIALIEHMEGEDPTALIGLPLIALVEMLTLEGVEIV.

The active-site Proton acceptor is D75.

It belongs to the Maf family. YceF subfamily. A divalent metal cation serves as cofactor.

The protein localises to the cytoplasm. It catalyses the reaction N(7)-methyl-GTP + H2O = N(7)-methyl-GMP + diphosphate + H(+). In terms of biological role, nucleoside triphosphate pyrophosphatase that hydrolyzes 7-methyl-GTP (m(7)GTP). May have a dual role in cell division arrest and in preventing the incorporation of modified nucleotides into cellular nucleic acids. This is 7-methyl-GTP pyrophosphatase from Nitrosospira multiformis (strain ATCC 25196 / NCIMB 11849 / C 71).